The primary structure comprises 117 residues: Nitrogen regulatory protein GlnK1 (117 aa).

Residues Thr32, 40-42 (GAQ), and 92-95 (GSGK) each bind ADP. ATP is bound by residues Thr32, 40 to 42 (GAQ), and 92 to 95 (GSGK).

The protein belongs to the P(II) protein family. As to quaternary structure, homotrimer. Interacts and forms stable complexes with the glutamine synthetase GlnA1.

The protein resides in the cytoplasm. Inhibitory effects on GlnA1 are abolished in the presence of the effector 2-oxoglutarate. Its function is as follows. Involved in the regulation of nitrogen metabolism. Regulates the activity of its targets by protein-protein interaction in response to the nitrogen status of the cell. Allows finetuning control of the glutamine synthetase GlnA1 under changing nitrogen availabilities via direct protein interaction. The sequence is that of Nitrogen regulatory protein GlnK1 from Methanosarcina mazei (strain ATCC BAA-159 / DSM 3647 / Goe1 / Go1 / JCM 11833 / OCM 88) (Methanosarcina frisia).